The chain runs to 354 residues: Membrane progestin receptor beta (354 aa).

Residues 1–76 (MTTAILERLS…FSLFQKHNEV (76 aa)) lie on the Cytoplasmic side of the membrane. Residues 77 to 97 (VNVWTHLLAALAVLLRFWAFV) form a helical membrane-spanning segment. At 98–111 (EAGALQWASPHTLP) the chain is on the extracellular side. Residues 112–132 (LLLFILSSITYLTCSLLAHLL) traverse the membrane as a helical segment. At 133–173 (QSKSELSHYTFYFVDYVGVSVYQYGSALAHFFYSSDQAWYE) the chain is on the cytoplasmic side. A helical transmembrane segment spans residues 174–194 (LFWIFFLPAAAFCGWLSCAGC). Over 195-213 (CYAKYRYRRPYPVMRKICQ) the chain is Extracellular. A helical membrane pass occupies residues 214–234 (VVPAGLAFVLDISPVAHRVAL). Residues 235-243 (CHLAGCQEQ) lie on the Cytoplasmic side of the membrane. Residues 244–264 (AAWYHTLQILFFLVSAYFFSC) form a helical membrane-spanning segment. The Extracellular portion of the chain corresponds to 265-283 (PVPEKYFPGSCDIVGHGHQ). A helical membrane pass occupies residues 284 to 304 (IFHAFLSVCTLSQLEAILLDY). Residues 305-315 (QGRHEIFLQRH) lie on the Cytoplasmic side of the membrane. A helical membrane pass occupies residues 316 to 336 (GPLSVYSACLSFFVLAACSAA). Over 337 to 354 (TATLLRHKVKDRLIKKDS) the chain is Extracellular.

It belongs to the ADIPOR family. As to expression, expressed in brain and testis.

The protein resides in the cell membrane. In terms of biological role, plasma membrane progesterone (P4) receptor coupled to G proteins. Seems to act through a G(i) mediated pathway. May be involved in oocyte maturation. Also binds dehydroepiandrosterone (DHEA), pregnanolone, pregnenolone and allopregnanolone. In Mus musculus (Mouse), this protein is Membrane progestin receptor beta.